Here is a 185-residue protein sequence, read N- to C-terminus: Elongation factor P (185 aa).

This sequence belongs to the elongation factor P family.

Its subcellular location is the cytoplasm. It functions in the pathway protein biosynthesis; polypeptide chain elongation. Involved in peptide bond synthesis. Stimulates efficient translation and peptide-bond synthesis on native or reconstituted 70S ribosomes in vitro. Probably functions indirectly by altering the affinity of the ribosome for aminoacyl-tRNA, thus increasing their reactivity as acceptors for peptidyl transferase. The protein is Elongation factor P of Bordetella petrii (strain ATCC BAA-461 / DSM 12804 / CCUG 43448).